A 310-amino-acid polypeptide reads, in one-letter code: Syntaxin-related protein KNOLLE (310 aa).

The residue at position 1 (Met1) is an N-acetylmethionine. Over 1–283 (MNDLMTKSFM…AKSHQRNSRK (283 aa)) the chain is Cytoplasmic. Positions 94–159 (NEIVSGLRKA…FQGLRQKMMS (66 aa)) form a coiled coil. The region spanning 212-274 (VVEIQDRYDA…ADGANELKTA (63 aa)) is the t-SNARE coiled-coil homology domain. A helical; Anchor for type IV membrane protein membrane pass occupies residues 284–304 (WMCIGIIVLLLIILIVVIPII). Residues 305-310 (TSFSSS) lie on the Vesicular side of the membrane.

Belongs to the syntaxin family. As to quaternary structure, interacts with SNAP33 and/or NPSN11 to form a t-SNARE complex and with KEULE. Abundant in flowers and developing siliques. A low level expression is seen in the seedlings, roots, and leaves.

It is found in the membrane. In terms of biological role, involved in cytokinesis. Acts as a cell plate-specific syntaxin, required for the fusion of vesicles at the plane of cell division. The protein is Syntaxin-related protein KNOLLE (KN) of Arabidopsis thaliana (Mouse-ear cress).